The following is a 189-amino-acid chain: Large ribosomal subunit protein bL9 (189 aa).

The protein belongs to the bacterial ribosomal protein bL9 family.

In terms of biological role, binds to the 23S rRNA. This is Large ribosomal subunit protein bL9 from Brucella ovis (strain ATCC 25840 / 63/290 / NCTC 10512).